Reading from the N-terminus, the 399-residue chain is S-adenosylmethionine synthase (399 aa).

Position 17 (H17) interacts with ATP. D19 serves as a coordination point for Mg(2+). Residue E52 coordinates K(+). The L-methionine site is built by E65 and Q109. Positions 109 to 119 (QSADIAQGVDA) are flexible loop. Residues 177-179 (DSK), 243-244 (KF), D252, 258-259 (RK), A275, and K279 each bind ATP. L-methionine is bound at residue D252. An L-methionine-binding site is contributed by K283.

It belongs to the AdoMet synthase family. Homotetramer; dimer of dimers. Mg(2+) serves as cofactor. The cofactor is K(+).

The protein localises to the cytoplasm. The catalysed reaction is L-methionine + ATP + H2O = S-adenosyl-L-methionine + phosphate + diphosphate. Its pathway is amino-acid biosynthesis; S-adenosyl-L-methionine biosynthesis; S-adenosyl-L-methionine from L-methionine: step 1/1. Functionally, catalyzes the formation of S-adenosylmethionine (AdoMet) from methionine and ATP. The overall synthetic reaction is composed of two sequential steps, AdoMet formation and the subsequent tripolyphosphate hydrolysis which occurs prior to release of AdoMet from the enzyme. This is S-adenosylmethionine synthase from Bradyrhizobium sp. (strain ORS 278).